The following is a 359-amino-acid chain: Type-1 angiotensin II receptor (359 aa).

Residues 1–25 (MILNSSTEDGIKRIQDDCPKAGRHN) lie on the Extracellular side of the membrane. Residue N4 is glycosylated (N-linked (GlcNAc...) asparagine). Residues Q15 and D17 each coordinate angiotensin II. Cystine bridges form between C18–C274 and C101–C180. The helical transmembrane segment at 26 to 55 (YIFVMIPTLYSIIFVVGIFGNSLVVIVIYF) threads the bilayer. At 56–61 (YMKLKT) the chain is on the cytoplasmic side. A helical transmembrane segment spans residues 62–89 (VASVFLLNLALADLCFLLTLPLWAVYTA). Topologically, residues 90-98 (MEYRWPFGN) are extracellular. The helical transmembrane segment at 99-125 (YLCKIASASVSFNLYASVFLLTCLSID) threads the bilayer. The Cytoplasmic segment spans residues 126–141 (RYLAIVHPMKSRLRRT). The helical transmembrane segment at 142 to 165 (MLVAKVTCIIIWLLAGLASLPAII) threads the bilayer. The Extracellular portion of the chain corresponds to 166–190 (HRNVFFIENTNITVCAFHYESQNST). R167 provides a ligand contact to angiotensin II. An N-linked (GlcNAc...) asparagine glycan is attached at N176. Positions 182, 183, and 184 each coordinate angiotensin II. N188 carries N-linked (GlcNAc...) asparagine glycosylation. The chain crosses the membrane as a helical span at residues 191-216 (LPIGLGLTKNILGFLFPFLIILTSYT). K199 contributes to the angiotensin II binding site. The Cytoplasmic portion of the chain corresponds to 217–239 (LIWKALKKAYEIQKNKPRNDDIF). A helical transmembrane segment spans residues 240–268 (KIIMAIVLFFFFSWIPHQIFTFLDVLIQL). Over 269-278 (GIIRDCRIAD) the chain is Extracellular. Residues 279 to 304 (IVDTAMPITICIAYFNNCLNPLFYGF) traverse the membrane as a helical segment. Residues 305 to 359 (LGKKFKKYFLQLLKYIPPKAKSHSNLSTKMSTLSYRPSDNVSSSTKKPAPCFEVE) are Cytoplasmic-facing. The span at 335–350 (STLSYRPSDNVSSSTK) shows a compositional bias: polar residues. Positions 335–359 (STLSYRPSDNVSSSTKKPAPCFEVE) are disordered. C355 carries the S-palmitoyl cysteine lipid modification.

Belongs to the G-protein coupled receptor 1 family. As to quaternary structure, interacts with MAS1. Interacts with ARRB1. Interacts with FLNA (via filamin repeat 21); increases PKA-mediated phosphorylation of FLNA. Post-translationally, C-terminal Ser or Thr residues may be phosphorylated.

The protein localises to the cell membrane. Functionally, receptor for angiotensin II, a vasoconstricting peptide, which acts as a key regulator of blood pressure and sodium retention by the kidney. The activated receptor in turn couples to G-alpha proteins G(q) (GNAQ, GNA11, GNA14 or GNA15) and thus activates phospholipase C and increases the cytosolic Ca(2+) concentrations, which in turn triggers cellular responses such as stimulation of protein kinase C. The protein is Type-1 angiotensin II receptor (AGTR1) of Pan troglodytes (Chimpanzee).